Reading from the N-terminus, the 218-residue chain is Pyrrolidone-carboxylate peptidase (218 aa).

Residues Glu81, Cys144, and His169 contribute to the active site.

Belongs to the peptidase C15 family. In terms of assembly, homotetramer.

It is found in the cytoplasm. It catalyses the reaction Release of an N-terminal pyroglutamyl group from a polypeptide, the second amino acid generally not being Pro.. In terms of biological role, removes 5-oxoproline from various penultimate amino acid residues except L-proline. The sequence is that of Pyrrolidone-carboxylate peptidase (pcp) from Deinococcus radiodurans (strain ATCC 13939 / DSM 20539 / JCM 16871 / CCUG 27074 / LMG 4051 / NBRC 15346 / NCIMB 9279 / VKM B-1422 / R1).